The sequence spans 972 residues: mRNA transport regulator MTR10 (972 aa).

It is found in the nucleus. Its function is as follows. Involved in mRNA transport from nucleus to cytoplasm. This chain is mRNA transport regulator MTR10 (MTR10), found in Saccharomyces cerevisiae (strain ATCC 204508 / S288c) (Baker's yeast).